The primary structure comprises 237 residues: NAD-dependent protein deacylase (237 aa).

The region spanning 1-235 (MRIAVLSGAG…PGLLQRLPAL (235 aa)) is the Deacetylase sirtuin-type domain. 8 to 28 (GAGISAESGVPTFRDDKNGLW) contacts NAD(+). Positions 53 and 56 each coordinate substrate. 86–89 (QNVD) contributes to the NAD(+) binding site. H104 functions as the Proton acceptor in the catalytic mechanism. The Zn(2+) site is built by C112, C115, C138, and C140. Residues 177-179 (GTS), 203-205 (NPE), and A221 each bind NAD(+).

Belongs to the sirtuin family. Class III subfamily. The cofactor is Zn(2+).

The protein localises to the cytoplasm. It carries out the reaction N(6)-acetyl-L-lysyl-[protein] + NAD(+) + H2O = 2''-O-acetyl-ADP-D-ribose + nicotinamide + L-lysyl-[protein]. It catalyses the reaction N(6)-succinyl-L-lysyl-[protein] + NAD(+) + H2O = 2''-O-succinyl-ADP-D-ribose + nicotinamide + L-lysyl-[protein]. In terms of biological role, NAD-dependent lysine deacetylase and desuccinylase that specifically removes acetyl and succinyl groups on target proteins. Modulates the activities of several proteins which are inactive in their acylated form. This is NAD-dependent protein deacylase from Mycolicibacterium paratuberculosis (strain ATCC BAA-968 / K-10) (Mycobacterium paratuberculosis).